A 499-amino-acid polypeptide reads, in one-letter code: Cytochrome P450 11B1, mitochondrial (499 aa).

A mitochondrion-targeting transit peptide spans 1 to 24 (MALRVTADVWLARPWQCLHRTRAL). C446 provides a ligand contact to heme.

Belongs to the cytochrome P450 family. Requires heme as cofactor. In terms of tissue distribution, adrenal zona fasciculata/reticularis.

Its subcellular location is the mitochondrion inner membrane. It catalyses the reaction a steroid + 2 reduced [adrenodoxin] + O2 + 2 H(+) = an 11beta-hydroxysteroid + 2 oxidized [adrenodoxin] + H2O. It carries out the reaction 21-hydroxyprogesterone + 2 reduced [adrenodoxin] + O2 + 2 H(+) = corticosterone + 2 oxidized [adrenodoxin] + H2O. The catalysed reaction is 21-hydroxyprogesterone + 2 reduced [adrenodoxin] + O2 + 2 H(+) = 18-hydroxy-11-deoxycorticosterone + 2 oxidized [adrenodoxin] + H2O. The enzyme catalyses 21-hydroxyprogesterone + 2 reduced [adrenodoxin] + O2 + 2 H(+) = 19-hydroxy-11-deoxycorticosterone + 2 oxidized [adrenodoxin] + H2O. It catalyses the reaction 11-deoxycortisol + 2 reduced [adrenodoxin] + O2 + 2 H(+) = cortisol + 2 oxidized [adrenodoxin] + H2O. It carries out the reaction cortisol + 2 reduced [adrenodoxin] + O2 + 2 H(+) = 18-hydroxycortisol + 2 oxidized [adrenodoxin] + H2O. The catalysed reaction is 11-deoxycortisol + 2 reduced [adrenodoxin] + O2 + 2 H(+) = 18-hydroxy-11-deoxycortisol + 2 oxidized [adrenodoxin] + H2O. The protein operates within steroid biosynthesis; glucocorticoid biosynthesis. It participates in steroid hormone biosynthesis. Functionally, a cytochrome P450 monooxygenase involved in the biosynthesis of adrenal corticoids. Catalyzes a variety of reactions that are essential for many species, including detoxification, defense, and the formation of endogenous chemicals like steroid hormones. Steroid 11beta, 18- and 19-hydroxylase with preferred regioselectivity at 11beta, then 18, and lastly 19. Catalyzes the hydroxylation of 11-deoxycortisol and 11-deoxycorticosterone (21-hydroxyprogesterone) at 11beta position, yielding cortisol or corticosterone, respectively, but cannot produce aldosterone. Mechanistically, uses molecular oxygen inserting one oxygen atom into a substrate for hydroxylation and reducing the second into a water molecule. Two electrons are provided by NADPH via a two-protein mitochondrial transfer system comprising flavoprotein FDXR (adrenodoxin/ferredoxin reductase) and nonheme iron-sulfur protein FDX1 or FDX2 (adrenodoxin/ferredoxin). Due to its lack of 18-oxidation activity, it is incapable of generating aldosterone. Could also be involved in the androgen metabolic pathway. The chain is Cytochrome P450 11B1, mitochondrial (Cyp11b1) from Rattus norvegicus (Rat).